Consider the following 559-residue polypeptide: Glucose-6-phosphate isomerase 4 (559 aa).

Glutamate 356 acts as the Proton donor in catalysis. Residues histidine 387 and lysine 513 contribute to the active site.

This sequence belongs to the GPI family.

Its subcellular location is the cytoplasm. The catalysed reaction is alpha-D-glucose 6-phosphate = beta-D-fructose 6-phosphate. Its pathway is carbohydrate biosynthesis; gluconeogenesis. It functions in the pathway carbohydrate degradation; glycolysis; D-glyceraldehyde 3-phosphate and glycerone phosphate from D-glucose: step 2/4. In terms of biological role, catalyzes the reversible isomerization of glucose-6-phosphate to fructose-6-phosphate. The chain is Glucose-6-phosphate isomerase 4 from Rhodococcus jostii (strain RHA1).